We begin with the raw amino-acid sequence, 152 residues long: MLP-like protein 165 (152 aa).

It belongs to the MLP family.

The polypeptide is MLP-like protein 165 (MLP165) (Arabidopsis thaliana (Mouse-ear cress)).